The primary structure comprises 200 residues: Holliday junction branch migration complex subunit RuvA (200 aa).

Residues 1 to 64 (MFTYFRGELI…EDLMQLFGFL (64 aa)) are domain I. Residues 65–143 (EEEERQLFRL…KLRPSGGTKS (79 aa)) form a domain II region. Positions 144 to 148 (VSRLS) are flexible linker. Positions 148-200 (SESSMRDDAVNALVTLGFLRSVAQKAVTESLTSLRNPQVEDLVRDALLTIRTP) are domain III.

The protein belongs to the RuvA family. In terms of assembly, homotetramer. Forms an RuvA(8)-RuvB(12)-Holliday junction (HJ) complex. HJ DNA is sandwiched between 2 RuvA tetramers; dsDNA enters through RuvA and exits via RuvB. An RuvB hexamer assembles on each DNA strand where it exits the tetramer. Each RuvB hexamer is contacted by two RuvA subunits (via domain III) on 2 adjacent RuvB subunits; this complex drives branch migration. In the full resolvosome a probable DNA-RuvA(4)-RuvB(12)-RuvC(2) complex forms which resolves the HJ.

Its subcellular location is the cytoplasm. In terms of biological role, the RuvA-RuvB-RuvC complex processes Holliday junction (HJ) DNA during genetic recombination and DNA repair, while the RuvA-RuvB complex plays an important role in the rescue of blocked DNA replication forks via replication fork reversal (RFR). RuvA specifically binds to HJ cruciform DNA, conferring on it an open structure. The RuvB hexamer acts as an ATP-dependent pump, pulling dsDNA into and through the RuvAB complex. HJ branch migration allows RuvC to scan DNA until it finds its consensus sequence, where it cleaves and resolves the cruciform DNA. The sequence is that of Holliday junction branch migration complex subunit RuvA from Chlorobium phaeobacteroides (strain BS1).